The chain runs to 312 residues: MKWSEISIHTTHEAVEAISNILHEAGAGGVVIEDPYDLVKDRDDWYGEIVELNPDDYPEEGVVIKAYLPVNSFLGETVEQIKQAINNLWLYDIDLGKNKITLSEVNEEEWATAWKKHYHPVKVSEKFTIVPTWETYEPASNDELIIEMDPGMAFGTGTHPTTVMCLQALEKYVHPGDNVIDVGTGSGILSIAAAMLGAHSVRALDLDPVAIDSARLNVKLNKVQHVVTVAQNNLLDHIDEQADVIVANILAEIILRFTADAYRLLKPGGRFITSGIIQAKKQDVKDGLLAAGFFIEEVNVMEDWVAFVAIKP.

S-adenosyl-L-methionine contacts are provided by T162, G183, D205, and N248.

Belongs to the methyltransferase superfamily. PrmA family.

The protein localises to the cytoplasm. It catalyses the reaction L-lysyl-[protein] + 3 S-adenosyl-L-methionine = N(6),N(6),N(6)-trimethyl-L-lysyl-[protein] + 3 S-adenosyl-L-homocysteine + 3 H(+). In terms of biological role, methylates ribosomal protein L11. This chain is Ribosomal protein L11 methyltransferase, found in Geobacillus thermodenitrificans (strain NG80-2).